We begin with the raw amino-acid sequence, 166 residues long: Transcription antitermination protein NusB (166 aa).

A compositionally biased stretch (basic and acidic residues) spans 1–18 (MISDESDRFNPRDPKPAD). Positions 1–28 (MISDESDRFNPRDPKPADAGKPSKSAKR) are disordered.

The protein belongs to the NusB family.

In terms of biological role, involved in transcription antitermination. Required for transcription of ribosomal RNA (rRNA) genes. Binds specifically to the boxA antiterminator sequence of the ribosomal RNA (rrn) operons. This is Transcription antitermination protein NusB from Pseudomonas putida (strain W619).